The primary structure comprises 503 residues: Glutamate--tRNA ligase (503 aa).

The short motif at 12 to 22 is the 'HIGH' region element; the sequence is PSPTGYLHVGG. Residues 259–263 carry the 'KMSKS' region motif; sequence KLSKR. Residue K262 participates in ATP binding.

The protein belongs to the class-I aminoacyl-tRNA synthetase family. Glutamate--tRNA ligase type 1 subfamily. Monomer.

It is found in the cytoplasm. The enzyme catalyses tRNA(Glu) + L-glutamate + ATP = L-glutamyl-tRNA(Glu) + AMP + diphosphate. Functionally, catalyzes the attachment of glutamate to tRNA(Glu) in a two-step reaction: glutamate is first activated by ATP to form Glu-AMP and then transferred to the acceptor end of tRNA(Glu). The sequence is that of Glutamate--tRNA ligase from Chloroherpeton thalassium (strain ATCC 35110 / GB-78).